A 224-amino-acid polypeptide reads, in one-letter code: Serum amyloid P-component (224 aa).

Residues 1–19 form the signal peptide; the sequence is MNKLMSWVSVLIILPEAFA. The Pentraxin (PTX) domain maps to 24–224; it reads RGKVFVFPRE…YVIVKPMVWG (201 aa). An N-linked (GlcNAc...) asparagine glycan is attached at Asn51. Cysteines 55 and 114 form a disulfide. Asp77, Asn78, Glu155, Gln156, and Asp157 together coordinate Ca(2+). The N-linked (GlcNAc...) asparagine glycan is linked to Asn166. Gln167 is a Ca(2+) binding site.

The protein belongs to the pentraxin family. As to quaternary structure, homopentamer. Pentraxin (or pentaxin) have a discoid arrangement of 5 non-covalently bound subunits. Ca(2+) is required as a cofactor.

The protein resides in the secreted. The protein is Serum amyloid P-component (APCS) of Bos taurus (Bovine).